We begin with the raw amino-acid sequence, 230 residues long: Orotidine 5'-phosphate decarboxylase (230 aa).

Substrate is bound by residues aspartate 11, lysine 34, 61-70, threonine 117, arginine 179, glutamine 188, glycine 208, and arginine 209; that span reads DLKLHDIPNT. Lysine 63 (proton donor) is an active-site residue.

Belongs to the OMP decarboxylase family. Type 1 subfamily. In terms of assembly, homodimer.

The catalysed reaction is orotidine 5'-phosphate + H(+) = UMP + CO2. Its pathway is pyrimidine metabolism; UMP biosynthesis via de novo pathway; UMP from orotate: step 2/2. Catalyzes the decarboxylation of orotidine 5'-monophosphate (OMP) to uridine 5'-monophosphate (UMP). This Streptococcus pyogenes serotype M1 protein is Orotidine 5'-phosphate decarboxylase.